A 333-amino-acid chain; its full sequence is DNA-directed RNA polymerase subunit alpha (333 aa).

The tract at residues 1-234 is alpha N-terminal domain (alpha-NTD); the sequence is MQSSVNEFLT…QQLAAFVDLK (234 aa). Residues 248–333 form an alpha C-terminal domain (alpha-CTD) region; it reads IDPILLRPVD…SLKKDDKATA (86 aa).

It belongs to the RNA polymerase alpha chain family. As to quaternary structure, homodimer. The RNAP catalytic core consists of 2 alpha, 1 beta, 1 beta' and 1 omega subunit. When a sigma factor is associated with the core the holoenzyme is formed, which can initiate transcription.

The enzyme catalyses RNA(n) + a ribonucleoside 5'-triphosphate = RNA(n+1) + diphosphate. Its function is as follows. DNA-dependent RNA polymerase catalyzes the transcription of DNA into RNA using the four ribonucleoside triphosphates as substrates. The chain is DNA-directed RNA polymerase subunit alpha from Pseudomonas putida (Arthrobacter siderocapsulatus).